Here is a 578-residue protein sequence, read N- to C-terminus: Rhamnogalacturonate lyase (578 aa).

The N-terminal stretch at Met1–Gly27 is a signal peptide.

The protein belongs to the polysaccharide lyase 4 family.

The protein localises to the secreted. It catalyses the reaction Endotype eliminative cleavage of L-alpha-rhamnopyranosyl-(1-&gt;4)-alpha-D-galactopyranosyluronic acid bonds of rhamnogalacturonan I domains in ramified hairy regions of pectin leaving L-rhamnopyranose at the reducing end and 4-deoxy-4,5-unsaturated D-galactopyranosyluronic acid at the non-reducing end.. Functionally, degrades the rhamnogalacturonan I (RG-I) backbone of pectin. Is required for the full virulence of E.chrysanthemi strain 3937 as it is involved in rotting of plant tissue. This is Rhamnogalacturonate lyase (rhiE) from Dickeya dadantii (strain 3937) (Erwinia chrysanthemi (strain 3937)).